The sequence spans 111 residues: Universal stress protein B (111 aa).

Transmembrane regions (helical) follow at residues 1–21 and 90–110; these read MISTVSLFWALCVVCVINMAR and FILTSALCGLVAIGLIGLAIW.

This sequence belongs to the universal stress protein B family.

It is found in the cell inner membrane. The protein is Universal stress protein B of Erwinia tasmaniensis (strain DSM 17950 / CFBP 7177 / CIP 109463 / NCPPB 4357 / Et1/99).